The following is a 386-amino-acid chain: 8-amino-7-oxononanoate synthase (386 aa).

A substrate-binding site is contributed by arginine 23. Glycine 110–tyrosine 111 serves as a coordination point for pyridoxal 5'-phosphate. Histidine 135 serves as a coordination point for substrate. Residues serine 181, histidine 209, and threonine 236 each coordinate pyridoxal 5'-phosphate. Lysine 239 is subject to N6-(pyridoxal phosphate)lysine. Threonine 354 serves as a coordination point for substrate.

It belongs to the class-II pyridoxal-phosphate-dependent aminotransferase family. BioF subfamily. As to quaternary structure, homodimer. The cofactor is pyridoxal 5'-phosphate.

The enzyme catalyses 6-carboxyhexanoyl-[ACP] + L-alanine + H(+) = (8S)-8-amino-7-oxononanoate + holo-[ACP] + CO2. It participates in cofactor biosynthesis; biotin biosynthesis. Functionally, catalyzes the decarboxylative condensation of pimeloyl-[acyl-carrier protein] and L-alanine to produce 8-amino-7-oxononanoate (AON), [acyl-carrier protein], and carbon dioxide. In Thiobacillus denitrificans (strain ATCC 25259 / T1), this protein is 8-amino-7-oxononanoate synthase.